The following is a 310-amino-acid chain: Ribonuclease Z (310 aa).

Zn(2+) is bound by residues His61, His63, Asp65, His66, and His139. Asp65 (proton acceptor) is an active-site residue. The tract at residues 150 to 175 (EDDRPGRFDRPKAEELGVPVGPKFGR) is disordered. Positions 153 to 164 (RPGRFDRPKAEE) are enriched in basic and acidic residues. 2 residues coordinate Zn(2+): Asp210 and His268.

This sequence belongs to the RNase Z family. As to quaternary structure, homodimer. It depends on Zn(2+) as a cofactor.

The catalysed reaction is Endonucleolytic cleavage of RNA, removing extra 3' nucleotides from tRNA precursor, generating 3' termini of tRNAs. A 3'-hydroxy group is left at the tRNA terminus and a 5'-phosphoryl group is left at the trailer molecule.. In terms of biological role, zinc phosphodiesterase, which displays some tRNA 3'-processing endonuclease activity. Probably involved in tRNA maturation, by removing a 3'-trailer from precursor tRNA. This is Ribonuclease Z from Halorubrum lacusprofundi (strain ATCC 49239 / DSM 5036 / JCM 8891 / ACAM 34).